The following is a 152-amino-acid chain: SsrA-binding protein (152 aa).

It belongs to the SmpB family.

The protein resides in the cytoplasm. Functionally, required for rescue of stalled ribosomes mediated by trans-translation. Binds to transfer-messenger RNA (tmRNA), required for stable association of tmRNA with ribosomes. tmRNA and SmpB together mimic tRNA shape, replacing the anticodon stem-loop with SmpB. tmRNA is encoded by the ssrA gene; the 2 termini fold to resemble tRNA(Ala) and it encodes a 'tag peptide', a short internal open reading frame. During trans-translation Ala-aminoacylated tmRNA acts like a tRNA, entering the A-site of stalled ribosomes, displacing the stalled mRNA. The ribosome then switches to translate the ORF on the tmRNA; the nascent peptide is terminated with the 'tag peptide' encoded by the tmRNA and targeted for degradation. The ribosome is freed to recommence translation, which seems to be the essential function of trans-translation. This Rickettsia typhi (strain ATCC VR-144 / Wilmington) protein is SsrA-binding protein.